The sequence spans 814 residues: Sortilin (814 aa).

The first 18 residues, 1–18 (MSTVLCCVLVLLISVALC), serve as a signal peptide directing secretion. Topologically, residues 19–741 (MDFEERPSSS…LTKEHSFNSA (723 aa)) are extracellular. Cystine bridges form between cysteine 70-cysteine 539, cysteine 240-cysteine 260, and cysteine 430-cysteine 440. Asparagine 82 is a glycosylation site (N-linked (GlcNAc...) asparagine). One copy of the BNR 1 repeat lies at 129–140 (YRSEDYGKTFQD). Asparagine 146 is a glycosylation site (N-linked (GlcNAc...) asparagine). 2 BNR repeats span residues 181–192 (FRSVDFGKSFVT) and 223–234 (WLSKDFGANWKK). N-linked (GlcNAc...) asparagine glycosylation occurs at asparagine 257. BNR repeat units lie at residues 269–280 (RKSLDYGKTFKT), 310–321 (HVSVDQGETWDM), and 359–370 (YISDDRGIVFSK). The N-linked (GlcNAc...) asparagine glycan is linked to asparagine 388. One copy of the BNR 7 repeat lies at 410–421 (VITFNQGGEWRP). 2 BNR repeats span residues 488–499 (YVSDDGGYTWFQ) and 531–542 (KFSTDEGQCWHA). N-linked (GlcNAc...) asparagine glycosylation is found at asparagine 544 and asparagine 565. Intrachain disulfides connect cysteine 595-cysteine 634, cysteine 617-cysteine 649, cysteine 651-cysteine 705, and cysteine 684-cysteine 722. N-linked (GlcNAc...) asparagine glycosylation is present at asparagine 666. A helical membrane pass occupies residues 742-762 (PIIAVVIIVLLISAVAGVIFI). At 763-814 (KKYVCGGRFLVHRYSVLQQHAEANGIDGLDDLDTLEGGKTHYHDDSDEDLLE) the chain is on the cytoplasmic side. Cysteine 767 carries the S-palmitoyl cysteine lipid modification. The short motif at 771–776 (FLVHRY) is the Endocytosis signal element.

It belongs to the VPS10-related sortilin family. SORT1 subfamily. As to quaternary structure, interacts with the cytosolic adapter proteins GGA1 and GGA2. Interacts with the heterotrimeric retromer cargo-selective complex (CSC), also described as vacuolar protein sorting subcomplex (VPS), formed by VPS26 (VPS26A or VPS26B), VPS29 and VPS35; which is involved in retrograde trafficking of the receptor from endosomes to the Golgi apparatus. In terms of processing, palmitoylated. Undergoes cysteine S-palmitoylation which promotes the partitioning of the receptor into an endosomal membrane subdomain where it can interact with the retromer cargo-selective complex which mediates its retrograde trafficking to the Golgi apparatus.

The protein resides in the golgi apparatus. The protein localises to the golgi stack membrane. Its subcellular location is the endosome membrane. It is found in the endoplasmic reticulum membrane. It localises to the nucleus membrane. The protein resides in the cell membrane. The protein localises to the lysosome membrane. In terms of biological role, functions as a sorting receptor in the Golgi compartment and as a clearance receptor on the cell surface. Required for protein transport from the Golgi apparatus to the lysosomes by a pathway that is independent of the mannose-6-phosphate receptor (M6PR). Lysosomal proteins bind specifically to the receptor in the Golgi apparatus and the resulting receptor-ligand complex is transported to an acidic prelysosomal compartment where the low pH mediates the dissociation of the complex. The receptor is then recycled back to the Golgi for another round of trafficking through its binding to the retromer. Also required for protein transport from the Golgi apparatus to the endosomes. May also mediate transport from the endoplasmic reticulum to the Golgi. This chain is Sortilin (sort1), found in Danio rerio (Zebrafish).